The primary structure comprises 128 residues: Large ribosomal subunit protein bL21 (128 aa).

Positions 104–128 (GKKPSVGPRPKRVKAEPAPAADAAE) are disordered. Residues 119–128 (EPAPAADAAE) are compositionally biased toward low complexity.

The protein belongs to the bacterial ribosomal protein bL21 family. In terms of assembly, part of the 50S ribosomal subunit. Contacts protein L20.

In terms of biological role, this protein binds to 23S rRNA in the presence of protein L20. This is Large ribosomal subunit protein bL21 from Rhodopseudomonas palustris (strain BisB5).